Consider the following 374-residue polypeptide: Putative C-&gt;U-editing enzyme APOBEC-4 (374 aa).

In terms of domain architecture, CMP/dCMP-type deaminase spans Pro-60–Leu-176. His-92 contributes to the Zn(2+) binding site. Catalysis depends on Glu-94, which acts as the Proton donor. The Zn(2+) site is built by Cys-126 and Cys-133. A disordered region spans residues Glu-259 to Arg-280.

This sequence belongs to the cytidine and deoxycytidylate deaminase family. It depends on Zn(2+) as a cofactor. As to expression, predominantly expressed in testis.

Putative C to U editing enzyme whose physiological substrate is not yet known. In Mus musculus (Mouse), this protein is Putative C-&gt;U-editing enzyme APOBEC-4 (Apobec4).